A 216-amino-acid chain; its full sequence is tRNA (guanine-N(7)-)-methyltransferase (216 aa).

Residues Glu43, Asp68, Asn95, and Asn117 each coordinate S-adenosyl-L-methionine. Residues Asp153 and 190–193 (TEYE) contribute to the substrate site.

It belongs to the class I-like SAM-binding methyltransferase superfamily. TrmB family.

It catalyses the reaction guanosine(46) in tRNA + S-adenosyl-L-methionine = N(7)-methylguanosine(46) in tRNA + S-adenosyl-L-homocysteine. It participates in tRNA modification; N(7)-methylguanine-tRNA biosynthesis. Catalyzes the formation of N(7)-methylguanine at position 46 (m7G46) in tRNA. This Desulfitobacterium hafniense (strain Y51) protein is tRNA (guanine-N(7)-)-methyltransferase.